A 160-amino-acid polypeptide reads, in one-letter code: Cyclic pyranopterin monophosphate synthase (160 aa).

Substrate contacts are provided by residues 77–79 (MCH) and 114–115 (ME). Aspartate 129 is an active-site residue.

This sequence belongs to the MoaC family. Homohexamer; trimer of dimers.

The enzyme catalyses (8S)-3',8-cyclo-7,8-dihydroguanosine 5'-triphosphate = cyclic pyranopterin phosphate + diphosphate. Its pathway is cofactor biosynthesis; molybdopterin biosynthesis. Catalyzes the conversion of (8S)-3',8-cyclo-7,8-dihydroguanosine 5'-triphosphate to cyclic pyranopterin monophosphate (cPMP). This Listeria monocytogenes serovar 1/2a (strain ATCC BAA-679 / EGD-e) protein is Cyclic pyranopterin monophosphate synthase.